The sequence spans 329 residues: Sideroflexin (329 aa).

5 helical membrane passes run 95 to 115 (AFLP…ASIG), 147 to 167 (ILEA…GLGW), 183 to 203 (LRMM…VLIM), 238 to 258 (FSRA…MGLF), and 274 to 294 (LNLA…IALF).

The protein belongs to the sideroflexin family.

It localises to the mitochondrion membrane. Its function is as follows. Mitochondrial amino-acid transporter that mediates transport of serine into mitochondria. This chain is Sideroflexin, found in Dictyostelium discoideum (Social amoeba).